We begin with the raw amino-acid sequence, 59 residues long: Large ribosomal subunit protein bL32 (59 aa).

A compositionally biased stretch (basic residues) spans 1-15 (MAVPKKKTSKSKRDM). A disordered region spans residues 1–26 (MAVPKKKTSKSKRDMRRATWNRKAAA).

It belongs to the bacterial ribosomal protein bL32 family.

This chain is Large ribosomal subunit protein bL32, found in Cyanothece sp. (strain PCC 7425 / ATCC 29141).